The following is a 161-amino-acid chain: Transcription antitermination protein NusB (161 aa).

The segment at 1-22 is disordered; it reads MNLSDFKPGEGTEVPEEEKSVS.

The protein belongs to the NusB family.

Involved in transcription antitermination. Required for transcription of ribosomal RNA (rRNA) genes. Binds specifically to the boxA antiterminator sequence of the ribosomal RNA (rrn) operons. The polypeptide is Transcription antitermination protein NusB (Hydrogenovibrio crunogenus (strain DSM 25203 / XCL-2) (Thiomicrospira crunogena)).